A 1414-amino-acid chain; its full sequence is MVHATACSEIIRAEVAELLGVRADALHPGANLVGQGLDSIRMMSLVGRWRRKGIAVDFATLAATPTIEAWSQLVSAGTGVAPTAVAAPGDAGLSQEGEPFPLAPMQHAMWVGRHDHQQLGGVAGHLYVEFDGARVDPDRLRAAATRLALRHPMLRVQFLPDGTQRIPPAAGSRDFPISVADLRHVAPDVVDQRLAGIRDAKSHQQLDGAVFELALTLLPGERTRLHVDLDMQAADAMSYRILLADLAALYDGREPPALGYTYQEYRQAIEAEETLPQPVRDADRDWWAQRIPQLPDPPALPTRAGGERDRRRSTRRWHWLDPQTRDALFARARARGITPAMTLAAAFANVLARWSASSRFLLNLPLFSRQALHPDVDLLVGDFTSSLLLDVDLTGARTAAARAQAVQEALRSAAGHSAYPGLSVLRDLSRHRGTQVLAPVVFTSALGLGDLFCPDVTEQFGTPGWIISQGPQVLLDAQVTEFDGGVLVNWDVREGVFAPGVIDAMFTHQVDELLRLAAGDDAWDAPSPSALPAAQRAVRAALNGRTAAPSTEALHDGFFRQAQQQPDAPAVFASSGDLSYAQLRDQASAVAAALRAAGLRVGDTVAVLGPKTGEQVAAVLGILAAGGVYLPIGVDQPRDRAERILATGSVNLALVCGPPCQVRVPVPTLLLADVLAAAPAEFVPGPSDPTALAYVLFTSGSTGEPKGVEVAHDAAMNTVETFIRHFELGAADRWLALATLECDMSVLDIFAALRSGGAIVVVDEAQRRDPDAWARLIDTYEVTALNFMPGWLDMLLEVGGGRLSSLRAVAVGGDWVRPDLARRLQVQAPSARFAGLGGATETAVHATIFEVQDAANLPPDWASVPYGVPFPNNACRVVADSGDDCPDWVAGELWVSGRGIARGYRGRPELTAERFVEHDGRTWYRTGDLARYWHDGTLEFVGRADHRVKISGYRVELGEIEAALQRLPGVHAAAATVLPGGSDVLAAAVCVDDAGVTAESIRQQLADLVPAHMIPRHVTLLDRIPFTDSGKIDRAEVGALLAAEVERSGDRSAPYAAPRTVLQRALRRIVADILGRANDAVGVHDDFFALGGDSVLATQVVAGIRRWLDSPSLMVADMFAARTIAALAQLLTGREANADRLELVAEVYLEIANMTSADVMAALDPIEQPAQPAFKPWVKRFTGTDKPGAVLVFPHAGGAAAAYRWLAKSLVANDVDTFVVQYPQRADRRSHPAADSIEALALELFEAGDWHLTAPLTLFGHCMGAIVAFEFARLAERNGVPVRALWASSGQAPSTVAASGPLPTADRDVLADMVDLGGTDPVLLEDEEFVELLVPAVKADYRALSGYSCPPDVRIRANIHAVGGNRDHRISREMLTSWETHTSGRFTLSHFDGGHFYLNDHLDAVARMVSADVR.

The Carrier 1 domain maps to 5–78; sequence TACSEIIRAE…AWSQLVSAGT (74 aa). At Ser39 the chain carries O-(pantetheine 4'-phosphoryl)serine. The segment at 96–394 is condensation/cyclization; it reads EGEPFPLAPM…SSLLLDVDLT (299 aa). The tract at residues 579–975 is adenylation; that stretch reads SYAQLRDQAS…RLPGVHAAAA (397 aa). The region spanning 1057-1135 is the Carrier 2 domain; it reads APRTVLQRAL…ALAQLLTGRE (79 aa). O-(pantetheine 4'-phosphoryl)serine is present on Ser1094. Positions 1188 to 1413 are thioesterase; that stretch reads GAVLVFPHAG…AVARMVSADV (226 aa).

It belongs to the ATP-dependent AMP-binding enzyme family. MbtB subfamily. Pantetheine 4'-phosphate is required as a cofactor. In terms of processing, 4'-phosphopantetheine is transferred from CoA to a specific serine in each of the two carrier protein domains, leading to their activation from apo to holo forms.

Its pathway is siderophore biosynthesis; mycobactin biosynthesis. Involved in the initial steps of the mycobactin biosynthetic pathway. Putatively couples activated salicylic acid with serine or threonine and cyclizes this precursor to the hydroxyphenyloxazoline ring system present in this class of siderophores. The polypeptide is Phenyloxazoline synthase MbtB (mbtB) (Mycobacterium bovis (strain ATCC BAA-935 / AF2122/97)).